We begin with the raw amino-acid sequence, 462 residues long: Argininosuccinate lyase (462 aa).

This sequence belongs to the lyase 1 family. Argininosuccinate lyase subfamily.

It localises to the cytoplasm. The catalysed reaction is 2-(N(omega)-L-arginino)succinate = fumarate + L-arginine. It functions in the pathway amino-acid biosynthesis; L-arginine biosynthesis; L-arginine from L-ornithine and carbamoyl phosphate: step 3/3. The chain is Argininosuccinate lyase from Bacillus cereus (strain ATCC 14579 / DSM 31 / CCUG 7414 / JCM 2152 / NBRC 15305 / NCIMB 9373 / NCTC 2599 / NRRL B-3711).